The chain runs to 164 residues: uncharacterized protein (164 aa).

Helical transmembrane passes span 25–45 (QFGF…PLLG), 63–83 (GMAV…VYIV), 120–140 (FWTA…ADFF), and 141–161 (TVQM…LMMM).

Belongs to the major facilitator superfamily.

It localises to the cell membrane. This is an uncharacterized protein from Bacillus subtilis (strain 168).